Here is a 41-residue protein sequence, read N- to C-terminus: Alpha-conotoxin-like Pu1.2 (41 aa).

Positions 1–21 are excised as a propeptide; sequence LDGRNAAADFETSDLLAMTIR. 2 disulfides stabilise this stretch: cysteine 24/cysteine 30 and cysteine 25/cysteine 37. The residue at position 37 (cysteine 37) is a Cysteine amide. Positions 38 to 41 are excised as a propeptide; it reads GGKR.

This sequence belongs to the conotoxin A superfamily. In terms of processing, non-native isomers 'ribbon' (with disulfide connectivity C1-C4, C2-C3) and 'beads' (with disulfide connectivity C1-C2, C3-C4) also inhibit high voltage-activated (HVA) calcium channel currents in rat DRG neurons (25-30% inhibition at 1 uM toxin). Mutants Pu1.2(9-16), [C3S; C9S]Pu1.2 and [C4S]Pu1.2(1-9) are all C-terminally amidated. As to expression, expressed by the venom duct.

The protein resides in the secreted. Its function is as follows. Alpha-conotoxins act on postsynaptic membranes, they bind to the nicotinic acetylcholine receptors (nAChR) and thus inhibit them. This toxin also inhibits high voltage-activated (HVA) calcium channel currents in rat DRG neurons (27% inhibition at 1 uM toxin) probably by activating GABA(B) receptors (GABBR1 and/or GABBR2). In Conus pulicarius (Flea-bitten cone), this protein is Alpha-conotoxin-like Pu1.2.